The sequence spans 780 residues: ATP-dependent 6-phosphofructokinase, liver type (780 aa).

Ala-2 carries the N-acetylalanine modification. The interval 2 to 390 (ATVDLEKLRM…NWKIYKLLAH (389 aa)) is N-terminal catalytic PFK domain 1. ATP is bound by residues Gly-25, 88-89 (RC), and 118-121 (GDGS). Asp-119 lines the Mg(2+) pocket. Substrate contacts are provided by residues 164–166 (SID), Arg-201, 208–210 (MGR), Glu-264, Arg-292, and 298–301 (HVQR). The Proton acceptor role is filled by Asp-166. Ser-377 bears the Phosphoserine mark. An interdomain linker region spans residues 391-400 (QKVSKEKSNF). The segment at 401–780 (SLAILNVGAP…RRTLSIDKGF (380 aa)) is C-terminal regulatory PFK domain 2. Beta-D-fructose 2,6-bisphosphate is bound by residues Arg-470, 527-531 (TISNN), Arg-565, 572-574 (MGG), and Glu-628. Ser-529 is a glycosylation site (O-linked (GlcNAc) serine). Tyr-640 carries the phosphotyrosine modification. Residues Arg-654, 660-663 (HLQQ), and Arg-734 each bind beta-D-fructose 2,6-bisphosphate. Ser-775 carries the phosphoserine modification.

It belongs to the phosphofructokinase type A (PFKA) family. ATP-dependent PFK group I subfamily. Eukaryotic two domain clade 'E' sub-subfamily. As to quaternary structure, homo- and heterotetramers. Phosphofructokinase (PFK) enzyme functions as a tetramer composed of different combinations of 3 types of subunits, called PFKM (M), PFKL (L) and PFKP (P). The composition of the PFK tetramer differs according to the tissue type it is present in. The kinetic and regulatory properties of the tetrameric enzyme are dependent on the subunit composition, hence can vary across tissues. The cofactor is Mg(2+). GlcNAcylation at Ser-529 by OGT decreases enzyme activity, leading to redirect glucose flux through the oxidative pentose phosphate pathway. Glycosylation is stimulated by both hypoxia and glucose deprivation.

The protein localises to the cytoplasm. The enzyme catalyses beta-D-fructose 6-phosphate + ATP = beta-D-fructose 1,6-bisphosphate + ADP + H(+). It functions in the pathway carbohydrate degradation; glycolysis; D-glyceraldehyde 3-phosphate and glycerone phosphate from D-glucose: step 3/4. Its activity is regulated as follows. Allosterically activated by ADP, AMP, or fructose 2,6-bisphosphate, and allosterically inhibited by ATP or citrate. GlcNAcylation by OGT overcomes allosteric regulation. Catalyzes the phosphorylation of D-fructose 6-phosphate to fructose 1,6-bisphosphate by ATP, the first committing step of glycolysis. Negatively regulates the phagocyte oxidative burst in response to bacterial infection by controlling cellular NADPH biosynthesis and NADPH oxidase-derived reactive oxygen species. Upon macrophage activation, drives the metabolic switch toward glycolysis, thus preventing glucose turnover that produces NADPH via pentose phosphate pathway. This Rattus norvegicus (Rat) protein is ATP-dependent 6-phosphofructokinase, liver type (Pfkl).